We begin with the raw amino-acid sequence, 20 residues long: Unknown protein NF019 from 2D-PAGE (20 aa).

The polypeptide is Unknown protein NF019 from 2D-PAGE (Naegleria fowleri (Brain eating amoeba)).